Consider the following 619-residue polypeptide: Lysophospholipid acyltransferase (619 aa).

The Lumenal segment spans residues 1-19; the sequence is MYNPVDAVLTKIITNYGID. Residues 20–39 form a helical membrane-spanning segment; sequence SFTLRYAICLLGSFPLNAIL. The Cytoplasmic portion of the chain corresponds to 40–51; that stretch reads KRIPEKRIGLKC. A helical membrane pass occupies residues 52–72; sequence CFIISMSMFYLFGVLNLVSGF. At 73 to 92 the chain is on the lumenal side; that stretch reads RTLFISTMFTYLISRFYRSK. A helical membrane pass occupies residues 93–113; it reads FMPHLNFMFVMGHLAINHIHA. Topologically, residues 114 to 231 are cytoplasmic; sequence QFLNEQTQTT…GERRQIPKNG (118 aa). The active-site Nucleophile is Asp146. The helical transmembrane segment at 232-252 threads the bilayer; sequence KLALWKVVQGLAWMILSTLGM. Topologically, residues 253–274 are lumenal; it reads KHFPVKYVLDKDGFPTRSFIFR. The chain crosses the membrane as a helical span at residues 275–295; sequence IHYLFLLGFIHRFKYYAAWTI. The Cytoplasmic portion of the chain corresponds to 296 to 429; sequence SEGSCILCGL…TPLPSKKIYD (134 aa). Catalysis depends on Glu297, which acts as the Nucleophile. The active site involves His382. The chain crosses the membrane as a helical span at residues 430–450; that stretch reads LVGIYAIKLAFGYMVQPFIIL. Residues 451–456 are Lumenal-facing; sequence DLKPSL. Residues 457 to 477 traverse the membrane as a helical segment; it reads MVWGSVYFYVHIIVAFSFFLF. The Cytoplasmic portion of the chain corresponds to 478–619; that stretch reads RGPYAKQVTE…SPKPISKKEE (142 aa). Ser513 is modified (phosphoserine). Residues 545 to 593 adopt a coiled-coil conformation; the sequence is ELEKWDNAKEDWEDFCKDYKEWRNKNGLEIEEENLSKAFERFKQEFSNA. Residues 592–619 are disordered; it reads NAASGSGERVRKMSFSGYSPKPISKKEE. Residues Ser605, Ser610, and Ser615 each carry the phosphoserine modification.

It belongs to the membrane-bound acyltransferase family.

The protein resides in the endoplasmic reticulum membrane. The catalysed reaction is a 1-acyl-sn-glycero-3-phosphate + an acyl-CoA = a 1,2-diacyl-sn-glycero-3-phosphate + CoA. It carries out the reaction a 1-acyl-sn-glycero-3-phosphocholine + an acyl-CoA = a 1,2-diacyl-sn-glycero-3-phosphocholine + CoA. It catalyses the reaction 1-acyl-sn-glycero-3-phospho-(1'-sn-glycerol) + an acyl-CoA = a 1,2-diacyl-sn-glycero-3-phospho-(1'-sn-glycerol) + CoA. The enzyme catalyses a 1-acyl-sn-glycero-3-phospho-(1D-myo-inositol) + an acyl-CoA = a 1,2-diacyl-sn-glycero-3-phospho-(1D-myo-inositol) + CoA. The catalysed reaction is a 1-acyl-sn-glycero-3-phospho-L-serine + an acyl-CoA = a 1,2-diacyl-sn-glycero-3-phospho-L-serine + CoA. It carries out the reaction a 1-acyl-sn-glycero-3-phosphoethanolamine + an acyl-CoA = a 1,2-diacyl-sn-glycero-3-phosphoethanolamine + CoA. It catalyses the reaction 1-(9Z-octadecenoyl)-sn-glycero-3-phosphoethanolamine + (9Z)-octadecenoyl-CoA = 1,2-di-(9Z-octadecenoyl)-sn-glycero-3-phosphoethanolamine + CoA. The enzyme catalyses 1-(9Z-octadecenoyl)-sn-glycero-3-phosphoethanolamine + (9Z)-hexadecenoyl-CoA = 1-(9Z)-octadecenoyl-2-(9Z)-hexadecenoyl-sn-glycero-3-phosphoethanolamine + CoA. The catalysed reaction is 1-(9Z-octadecenoyl)-sn-glycero-3-phosphoethanolamine + hexadecanoyl-CoA = 1-(9Z-octadecenoyl)-2-hexadecanoyl-sn-glycero-3-phosphoethanolamine + CoA. It carries out the reaction 1-(9Z-octadecenoyl)-sn-glycero-3-phosphoethanolamine + tetradecanoyl-CoA = 1-(9Z)-octadecenoyl-2-tetradecanoyl-sn-glycero-3-phosphoethanolamine + CoA. It catalyses the reaction 1-(9Z-octadecenoyl)-sn-glycero-3-phosphate + (9Z)-octadecenoyl-CoA = 1,2-di-(9Z-octadecenoyl)-sn-glycero-3-phosphate + CoA. The enzyme catalyses (9Z)-hexadecenoyl-CoA + 1-hexadecanoyl-sn-glycero-3-phosphocholine = 1-hexadecanoyl-2-(9Z-hexadecenoyl)-sn-glycero-3-phosphocholine + CoA. The catalysed reaction is 1-hexadecanoyl-sn-glycero-3-phosphocholine + (9Z)-octadecenoyl-CoA = 1-hexadecanoyl-2-(9Z-octadecenoyl)-sn-glycero-3-phosphocholine + CoA. It carries out the reaction 1-tetradecanoyl-sn-glycero-3-phosphoethanolamine + (9Z)-octadecenoyl-CoA = 1-tetradecanoyl-2-(9Z-octadecenoyl)-sn-glycero-3-phosphoethanolamine + CoA. It catalyses the reaction 1-(9Z-octadecenoyl)-sn-glycero-3-phospho-L-serine + (9Z)-octadecenoyl-CoA = 1,2-di-(9Z)-octadecenoyl-sn-glycero-3-phospho-L-serine + CoA. The enzyme catalyses a 1-acyl-sn-glycero-3-phospho-(1D-myo-inositol) + (9Z)-octadecenoyl-CoA = a 1-acyl-2-(9Z-octadecenoyl)-sn-glycero-3-phospho-(1D-myo-inositol) + CoA. Its pathway is lipid metabolism; phospholipid metabolism. Its function is as follows. Broad specificity membrane-bound O-acyltransferase that mediates the incorporation of unsaturated acyl chains into the sn-2 position of various lysophospholipids. Preferentially acylates lysophosphocholine (LPC), but also lysophosphoethanolamine (LPE), lysophosphatidylglycerol (LPG), lysophosphatidic acid (LPA), lysophosphoethanolamine (LPE), lysophosphoinositol (LPI), and lysophosphoserine (LPS). Prefers an acyl residue to an alkyl residue at the sn-1 position of lysophospholipid acceptors. Accepts acyl chains in acyl-CoA from C-2 to C-20, and shows strong preference for unsaturated acyl-CoAs with 16-20 carbons. Together with SLC1, plays a central role in phosphatidic acid (PA) biosynthesis. PA is the intermediate, from which all glycerophospholipids are synthesized. Can also introduce an acyl chain at the sn-1 position of the lysophosphatidylcholine analog 1-hydroxy-2-hexadecyl-sn-glycero-3-phosphocholine (HHPC). In Saccharomyces cerevisiae (strain ATCC 204508 / S288c) (Baker's yeast), this protein is Lysophospholipid acyltransferase.